We begin with the raw amino-acid sequence, 266 residues long: Family of serine hydrolases 3 (266 aa).

Catalysis depends on charge relay system residues Ser117, Asp180, and His209.

Belongs to the AB hydrolase 3 family.

Serine hydrolase of unknown specificity. This is Family of serine hydrolases 3 (FSH3) from Saccharomyces cerevisiae (strain ATCC 204508 / S288c) (Baker's yeast).